Reading from the N-terminus, the 278-residue chain is Pantothenate synthetase (278 aa).

26–33 (MGNLHEGH) contacts ATP. His-33 acts as the Proton donor in catalysis. Residue Gln-57 participates in (R)-pantoate binding. Gln-57 provides a ligand contact to beta-alanine. 144–147 (GKKD) lines the ATP pocket. Gln-150 contributes to the (R)-pantoate binding site. ATP contacts are provided by residues Gly-173 and 181–184 (LSSR).

This sequence belongs to the pantothenate synthetase family. Homodimer.

The protein resides in the cytoplasm. It catalyses the reaction (R)-pantoate + beta-alanine + ATP = (R)-pantothenate + AMP + diphosphate + H(+). The protein operates within cofactor biosynthesis; (R)-pantothenate biosynthesis; (R)-pantothenate from (R)-pantoate and beta-alanine: step 1/1. Catalyzes the condensation of pantoate with beta-alanine in an ATP-dependent reaction via a pantoyl-adenylate intermediate. The chain is Pantothenate synthetase from Neisseria meningitidis serogroup B (strain ATCC BAA-335 / MC58).